The primary structure comprises 210 residues: FMN-dependent NADH:quinone oxidoreductase (210 aa).

FMN contacts are provided by residues Ser-10 and 16 to 18 (SRS).

Belongs to the azoreductase type 1 family. As to quaternary structure, homodimer. FMN serves as cofactor.

It carries out the reaction 2 a quinone + NADH + H(+) = 2 a 1,4-benzosemiquinone + NAD(+). The catalysed reaction is N,N-dimethyl-1,4-phenylenediamine + anthranilate + 2 NAD(+) = 2-(4-dimethylaminophenyl)diazenylbenzoate + 2 NADH + 2 H(+). Quinone reductase that provides resistance to thiol-specific stress caused by electrophilic quinones. Its function is as follows. Also exhibits azoreductase activity. Catalyzes the reductive cleavage of the azo bond in aromatic azo compounds to the corresponding amines. The polypeptide is FMN-dependent NADH:quinone oxidoreductase (Kineococcus radiotolerans (strain ATCC BAA-149 / DSM 14245 / SRS30216)).